Consider the following 576-residue polypeptide: Rop guanine nucleotide exchange factor 13 (576 aa).

A PRONE domain is found at 119–485 (KSCYFAYVTE…QLTQNPELAM (367 aa)). Residues 557 to 570 (KTTYLESLGTTRSP) are compositionally biased toward polar residues. The tract at residues 557–576 (KTTYLESLGTTRSPTAGRYS) is disordered.

As to quaternary structure, interacts with PRK6. Specifically expressed in mature flowers.

Guanine-nucleotide exchange factor (GEF) that acts as an activator of Rop (Rho of plants) GTPases by promoting the exchange of GDP for GTP. The polypeptide is Rop guanine nucleotide exchange factor 13 (Arabidopsis thaliana (Mouse-ear cress)).